Reading from the N-terminus, the 168-residue chain is I-Kappa-B like protein G2 (168 aa).

ANK repeat units follow at residues 56-88 (SQRQCVHIVVCEDKVNAIKKLKVLLEMGADING) and 93-123 (GGNTPLHLAVHSNNYKLVKWLCKQPSINKTA).

The protein belongs to the polydnaviridae I-Kappa-B-like protein family.

Its function is as follows. Suppresses the host immune response through NF-kappa-B inactivation. Possesses ankyrin repeat domains required for NF-kappa-B binding but lacks the regulatory regions required for dissociation from NF-kappa-B and degradation. Therefore, prevents host NF-kappa-B release and subsequent activation. In Microplitis demolitor (Parasitoid wasp), this protein is I-Kappa-B like protein G2 (G4).